Here is a 181-residue protein sequence, read N- to C-terminus: Der GTPase-activating protein YihI (181 aa).

The interval 1 to 73 is disordered; that stretch reads MSRIKKARKP…DPRIGSKKPI (73 aa). The segment covering 22-32 has biased composition (basic and acidic residues); the sequence is NRTDRDVESRE. A compositionally biased stretch (basic residues) spans 33-42; that stretch reads IKRKRKRKGL. Basic and acidic residues predominate over residues 55 to 67; that stretch reads QARRNAQKKDPRI.

It belongs to the YihI family. As to quaternary structure, interacts with Der.

A GTPase-activating protein (GAP) that modifies Der/EngA GTPase function. May play a role in ribosome biogenesis. The protein is Der GTPase-activating protein YihI of Aliivibrio fischeri (strain ATCC 700601 / ES114) (Vibrio fischeri).